A 358-amino-acid polypeptide reads, in one-letter code: MTDQDSKPRVTIALGTSSSSSSFKTKKPSRPTHTRRHHARASSNHYSSESEDDDDETGGQRTGRVQAITEISTYGDDNELENRDRSDRRRDRSRDRDRDRNRDGDRNRDRRRDNRSQDRDRHNNRSSRPSRDDDASRSRRRSTSRSRDRDHKPKDPKDLQEPETAPPKWGLTINPKSTTTATSSFHHQRQPRSPSPEEKPPQTLEEQALSSLLSLDNKGSSTASKRKRSHSPSSHDRDRSPDHSDYRAVPIDDFGATLLKQFGWDGKMRGKVKEVTHKHANLAGLGAKDAKGAEELDAWNQKISGRGGGDSRGRDSRPVRLEDYRREENKKKQRMEYRHGESSYKQERERERERRGDR.

Disordered regions lie at residues 1–250 (MTDQ…RAVP) and 298–358 (AWNQ…RGDR). The segment covering 24–40 (KTKKPSRPTHTRRHHAR) has biased composition (basic residues). Composition is skewed to basic and acidic residues over residues 80 to 137 (LENR…DASR) and 145 to 160 (RSRDRDHKPKDPKDLQ). Residues 174–185 (NPKSTTTATSSF) show a composition bias toward polar residues. 2 stretches are compositionally biased toward basic and acidic residues: residues 233–246 (SSHDRDRSPDHSDY) and 309–358 (GDSR…RGDR).

Belongs to the SPP2 family. In terms of assembly, associated with the spliceosome.

The protein localises to the nucleus. Involved in spliceosome maturation and the first step of pre-mRNA splicing. This Neurospora crassa (strain ATCC 24698 / 74-OR23-1A / CBS 708.71 / DSM 1257 / FGSC 987) protein is Pre-mRNA-splicing factor spp2 (msp-40).